Consider the following 146-residue polypeptide: Ribonuclease H (146 aa).

The RNase H type-1 domain maps to 4–145 (ELNKVVVYTD…ADMLARSQIV (142 aa)). The Mg(2+) site is built by aspartate 13, glutamate 51, aspartate 73, and aspartate 137.

Belongs to the RNase H family. Monomer. Mg(2+) serves as cofactor.

Its subcellular location is the cytoplasm. It carries out the reaction Endonucleolytic cleavage to 5'-phosphomonoester.. In terms of biological role, endonuclease that specifically degrades the RNA of RNA-DNA hybrids. In Ehrlichia ruminantium (strain Gardel), this protein is Ribonuclease H.